The chain runs to 837 residues: AdoMet-dependent rRNA methyltransferase SPB1 (837 aa).

S-adenosyl-L-methionine contacts are provided by glycine 58, tryptophan 60, aspartate 78, aspartate 94, and aspartate 119. The active-site Proton acceptor is the lysine 159. Positions 345-390 (LNEEEQIEKELRDLQEKQKQKQKREKRRKNEEKQKELTRMQMNMLT) form a coiled coil. 4 disordered regions span residues 359–381 (QEKQ…QKEL), 483–529 (FRAK…DEDD), 573–644 (TDDV…TTKE), and 779–808 (TKKQ…KGIK). Over residues 372–381 (RKNEEKQKEL) the composition is skewed to basic and acidic residues. The segment covering 518–529 (ESDDSELSDEDD) has biased composition (acidic residues). Over residues 593–602 (SYNEMKKEDL) the composition is skewed to basic and acidic residues. Residues 603-635 (SDSSDEDSSSESDFEIVANDESDGDIDSDYDSD) are compositionally biased toward acidic residues.

The protein belongs to the class I-like SAM-binding methyltransferase superfamily. RNA methyltransferase RlmE family. SPB1 subfamily. As to quaternary structure, component of the nucleolar and nucleoplasmic pre-60S ribosomal particle.

It is found in the nucleus. The protein localises to the nucleolus. The catalysed reaction is a ribonucleotide in rRNA + S-adenosyl-L-methionine = a 2'-O-methylribonucleotide in rRNA + S-adenosyl-L-homocysteine + H(+). In terms of biological role, required for proper assembly of pre-ribosomal particles during the biogenesis of the 60S ribosomal subunit. This Candida glabrata (strain ATCC 2001 / BCRC 20586 / JCM 3761 / NBRC 0622 / NRRL Y-65 / CBS 138) (Yeast) protein is AdoMet-dependent rRNA methyltransferase SPB1.